The primary structure comprises 722 residues: Polyribonucleotide nucleotidyltransferase (722 aa).

Mg(2+)-binding residues include Asp487 and Asp493. The region spanning 554 to 613 is the KH domain; it reads PRIETFKIPTDKIREVIGTGGKVIREIVEKTGAKVNIEDDGTVKVASSDGESIKAAIKWI. Residues 623 to 691 enclose the S1 motif domain; that stretch reads GEIYEGTVVK…DRGKTRLSMK (69 aa). The segment at 697 to 722 is disordered; that stretch reads TGEDLEAKQKAEAKAEGEAPAQAAGE. Over residues 701-713 the composition is skewed to basic and acidic residues; sequence LEAKQKAEAKAEG.

It belongs to the polyribonucleotide nucleotidyltransferase family. Mg(2+) serves as cofactor.

The protein resides in the cytoplasm. The enzyme catalyses RNA(n+1) + phosphate = RNA(n) + a ribonucleoside 5'-diphosphate. Involved in mRNA degradation. Catalyzes the phosphorolysis of single-stranded polyribonucleotides processively in the 3'- to 5'-direction. This chain is Polyribonucleotide nucleotidyltransferase, found in Rhodopseudomonas palustris (strain ATCC BAA-98 / CGA009).